The chain runs to 242 residues: RNA transcription, translation and transport factor protein (242 aa).

It belongs to the RTRAF family. Homodimer. Component of a tRNA-splicing ligase complex.

The protein localises to the nucleus. Its subcellular location is the cytoplasm. It is found in the cytosol. It localises to the perinuclear region. The protein resides in the cytoskeleton. The protein localises to the microtubule organizing center. Its subcellular location is the centrosome. Functionally, RNA-binding protein involved in modulation of mRNA transcription by Polymerase II. Component of the tRNA-splicing ligase complex. In Danio rerio (Zebrafish), this protein is RNA transcription, translation and transport factor protein.